The sequence spans 130 residues: Ribosome-binding factor A (130 aa).

The protein belongs to the RbfA family. In terms of assembly, monomer. Binds 30S ribosomal subunits, but not 50S ribosomal subunits or 70S ribosomes.

It localises to the cytoplasm. In terms of biological role, one of several proteins that assist in the late maturation steps of the functional core of the 30S ribosomal subunit. Associates with free 30S ribosomal subunits (but not with 30S subunits that are part of 70S ribosomes or polysomes). Required for efficient processing of 16S rRNA. May interact with the 5'-terminal helix region of 16S rRNA. This chain is Ribosome-binding factor A, found in Prochlorococcus marinus (strain MIT 9312).